A 404-amino-acid chain; its full sequence is Glutamyl-tRNA reductase (404 aa).

Substrate-binding positions include Thr-47–Arg-50, Ser-94, Glu-99–Glu-101, and Gln-105. Cys-48 functions as the Nucleophile in the catalytic mechanism. Gly-174 to Gly-179 is a binding site for NADP(+).

As to quaternary structure, homotetramer.

The enzyme catalyses (S)-4-amino-5-oxopentanoate + tRNA(Glu) + NADP(+) = L-glutamyl-tRNA(Glu) + NADPH + H(+). Its pathway is porphyrin-containing compound metabolism; protoporphyrin-IX biosynthesis; 5-aminolevulinate from L-glutamyl-tRNA(Glu): step 1/2. Its activity is regulated as follows. Inhibited by heavy metal compounds, Zn(2+), and heme. Also competitively inhibited by glutamycin. Functionally, catalyzes the NADPH-dependent reduction of glutamyl-tRNA(Glu) to glutamate 1-semialdehyde (GSA). In the absence of NADPH, exhibits substrate esterase activity, leading to the release of glutamate from tRNA. The polypeptide is Glutamyl-tRNA reductase (hemA) (Methanopyrus kandleri (strain AV19 / DSM 6324 / JCM 9639 / NBRC 100938)).